Here is a 478-residue protein sequence, read N- to C-terminus: MKRSRRTKIVATLGPASDTPEMIEKLFHAGADVFRINMSHLAREKLPERIEVIRTIEREAKRPIGILVDLQGPKLRLGTFVGDAAVLENGQTFVLDSDPTPGDTDRVFLPHPEILSALEPSHGILIDDGKLRLIVTEVSEGRAVTRVEVGGRISNRKGVSLPHTVLPVPAMTEKDRGDLEAGLAAGADWIAVSFVQRPEDVAEVKKVAAGRALVMAKIEKPQALTRLDEIIEISDGIMVARGDLGVEMPLEQVPGVQKRITRVARRLGKPVVVATQMLESMITSPVPTRAEVSDVATAVYEGADAVMLSAESAAGDFPVEAIGTMNRIAEQVERDALYWSILMAQRSEPEPTASDAIAAAAHQIVEALSLRSIMAWTHSGSTVLRLARARPNASVIALTPKRETARRLTMAWGVHPIVTKDASDVDDMAFRAAKFAVRERFAEIGDRVIIVAGVPFGIPGATNMVRIAFVTREHAERA.

Arg35 serves as a coordination point for substrate. K(+)-binding residues include Asn37, Ser39, and Asp69. 37–40 (NMSH) provides a ligand contact to ATP. The ATP site is built by Arg76 and Lys157. Residue Glu219 coordinates Mg(2+). Positions 242, 243, and 275 each coordinate substrate. Residue Asp243 coordinates Mg(2+).

It belongs to the pyruvate kinase family. In terms of assembly, homotetramer. Mg(2+) serves as cofactor. Requires K(+) as cofactor.

It catalyses the reaction pyruvate + ATP = phosphoenolpyruvate + ADP + H(+). Its pathway is carbohydrate degradation; glycolysis; pyruvate from D-glyceraldehyde 3-phosphate: step 5/5. This is Pyruvate kinase (pyk) from Methylorubrum extorquens (strain ATCC 14718 / DSM 1338 / JCM 2805 / NCIMB 9133 / AM1) (Methylobacterium extorquens).